The primary structure comprises 238 residues: Envelope glycoprotein G (238 aa).

A signal peptide spans 1–24 (MSQGAMRAVVPIIPFLLVLVGVSG). The Virion surface portion of the chain corresponds to 25–189 (VPTNVSSTTQ…SFLTASPALD (165 aa)). N-linked (GlcNAc...) asparagine; by host glycans are attached at residues asparagine 28 and asparagine 49. 2 stretches are compositionally biased toward polar residues: residues 28–42 (NVSS…TTGR) and 49–68 (NMTQ…TTPD). The disordered stretch occupies residues 28 to 171 (NVSSTTQPQL…LTSKGRPLVP (144 aa)). Residues 78–88 (LEEEEEEEGAG) are compositionally biased toward acidic residues. A compositionally biased stretch (basic and acidic residues) spans 89-100 (DGEHLEGGDGTR). Residues 190–210 (TLFVVSTVIHTLSFLCIGAMA) form a helical membrane-spanning segment. Residues 211-238 (THLCGGWSRRGRRTHPSVRYVCLPSERG) are Intravirion-facing.

The protein belongs to the alphaherpesvirinae glycoprotein G family.

The protein resides in the virion membrane. Its function is as follows. Chemokine-binding protein that inhibits neutrophils' chemotaxis. The polypeptide is Envelope glycoprotein G (gG) (Human herpesvirus 1 (strain 17) (HHV-1)).